A 318-amino-acid chain; its full sequence is Taste receptor type 2 member 117 (318 aa).

Residues 1–16 (MQHNLKTIFVISHSTL) lie on the Extracellular side of the membrane. Residues 17-37 (TIILFTELVTGIIGNGFMALV) traverse the membrane as a helical segment. Residues 38 to 53 (HCMDWLRRKKISLVNQ) lie on the Cytoplasmic side of the membrane. A helical membrane pass occupies residues 54–74 (ILTALAISRIFQLCLLFISLV). Residues 75-93 (ISFSYPDLTTTSLIKVTCN) lie on the Extracellular side of the membrane. The helical transmembrane segment at 94 to 114 (LWIIVNHFNIWLATCLGIFYF) threads the bilayer. Over 115–134 (LKISNFSNSLFLYLKWRVEK) the chain is Cytoplasmic. Residues 135–155 (VVLVTLLVSLVLLTLNSLLIN) traverse the membrane as a helical segment. Over 156 to 189 (LEINICINEYQRNITYSFNSYYHANCHRQMLSLH) the chain is Extracellular. Asparagine 168 is a glycosylation site (N-linked (GlcNAc...) asparagine). A helical transmembrane segment spans residues 190–210 (IIFLSVPFVLSLSTFLLLIFS). At 211–238 (LGTHHKKMQQHVQGRRDASTMAHFKALQ) the chain is on the cytoplasmic side. The helical transmembrane segment at 239–259 (TVIAFLLLYSIFILSVLVQIW) threads the bilayer. Over 260 to 268 (KYELLKKNL) the chain is Extracellular. The chain crosses the membrane as a helical span at residues 269 to 289 (FILFCQVAYVAFPSFHSYILI). Over 290 to 318 (LGDMKMRQACLSVLWWQKFRKNYVEPLDL) the chain is Cytoplasmic.

The protein belongs to the G-protein coupled receptor T2R family.

It is found in the membrane. Its function is as follows. Putative taste receptor which may play a role in the perception of bitterness. The protein is Taste receptor type 2 member 117 of Rattus norvegicus (Rat).